The chain runs to 466 residues: Membrane-bound lytic murein transglycosylase F (466 aa).

Residues 1–24 (MKRFKLNYFIIGLIAILLTWSLWT) form the signal peptide. Residues 25–268 (TVPWRNAHQD…RLEEKYLGHV (244 aa)) are non-LT domain. Residues 269–466 (GGFDYVDTKT…KEKKAAQLAD (198 aa)) form an LT domain region. The active site involves E313.

The protein in the N-terminal section; belongs to the bacterial solute-binding protein 3 family. This sequence in the C-terminal section; belongs to the transglycosylase Slt family.

It localises to the cell outer membrane. The enzyme catalyses Exolytic cleavage of the (1-&gt;4)-beta-glycosidic linkage between N-acetylmuramic acid (MurNAc) and N-acetylglucosamine (GlcNAc) residues in peptidoglycan, from either the reducing or the non-reducing ends of the peptidoglycan chains, with concomitant formation of a 1,6-anhydrobond in the MurNAc residue.. Functionally, murein-degrading enzyme that degrades murein glycan strands and insoluble, high-molecular weight murein sacculi, with the concomitant formation of a 1,6-anhydromuramoyl product. Lytic transglycosylases (LTs) play an integral role in the metabolism of the peptidoglycan (PG) sacculus. Their lytic action creates space within the PG sacculus to allow for its expansion as well as for the insertion of various structures such as secretion systems and flagella. In Sodalis glossinidius (strain morsitans), this protein is Membrane-bound lytic murein transglycosylase F.